Reading from the N-terminus, the 148-residue chain is MTMFSTRSRLRSAAADTFALVVYCFVIGMIIEIVISGMTFQQSLSSRLVSIPVNILIAWPYGLYRDAFIRFARRHAGEHMWARNLADLLAYVSFQSPVYALILWSVGADLEQITTAVASNALVSMAMGVAYGYFLEYCRKLFRVAGYI.

Helical transmembrane passes span 18 to 38 (FALVVYCFVIGMIIEIVISGM), 49 to 69 (VSIPVNILIAWPYGLYRDAFI), 88 to 108 (LLAYVSFQSPVYALILWSVGA), and 115 to 135 (TAVASNALVSMAMGVAYGYFL).

This sequence belongs to the AlaE exporter family.

Its subcellular location is the cell inner membrane. Its function is as follows. Exports L-alanine. This is L-alanine exporter AlaE from Yersinia enterocolitica subsp. palearctica serotype O:3 (strain DSM 13030 / CIP 106945 / Y11).